Reading from the N-terminus, the 420-residue chain is Serine--tRNA ligase (420 aa).

229-231 (TAE) lines the L-serine pocket. 260-262 (RSE) is a binding site for ATP. An L-serine-binding site is contributed by glutamate 283. 347–350 (EISS) serves as a coordination point for ATP. Serine 381 is an L-serine binding site.

The protein belongs to the class-II aminoacyl-tRNA synthetase family. Type-1 seryl-tRNA synthetase subfamily. In terms of assembly, homodimer. The tRNA molecule binds across the dimer.

It localises to the cytoplasm. It catalyses the reaction tRNA(Ser) + L-serine + ATP = L-seryl-tRNA(Ser) + AMP + diphosphate + H(+). The enzyme catalyses tRNA(Sec) + L-serine + ATP = L-seryl-tRNA(Sec) + AMP + diphosphate + H(+). It functions in the pathway aminoacyl-tRNA biosynthesis; selenocysteinyl-tRNA(Sec) biosynthesis; L-seryl-tRNA(Sec) from L-serine and tRNA(Sec): step 1/1. Functionally, catalyzes the attachment of serine to tRNA(Ser). Is also able to aminoacylate tRNA(Sec) with serine, to form the misacylated tRNA L-seryl-tRNA(Sec), which will be further converted into selenocysteinyl-tRNA(Sec). The protein is Serine--tRNA ligase of Gluconobacter oxydans (strain 621H) (Gluconobacter suboxydans).